We begin with the raw amino-acid sequence, 356 residues long: uncharacterized protein (356 aa).

The protein belongs to the NAD(P)-dependent epimerase/dehydratase family. It depends on NAD(+) as a cofactor. NADP(+) is required as a cofactor.

In terms of biological role, putative nucleotide sugar epimerase/dehydrogenase. This is an uncharacterized protein from Sinorhizobium fredii (strain NBRC 101917 / NGR234).